A 362-amino-acid chain; its full sequence is Dihydroorotate dehydrogenase (quinone) (362 aa).

FMN contacts are provided by residues 62-66 (AGYDK) and T86. K66 provides a ligand contact to substrate. 111–115 (NRLGF) provides a ligand contact to substrate. FMN contacts are provided by N139 and N170. Position 170 (N170) interacts with substrate. S173 functions as the Nucleophile in the catalytic mechanism. N175 provides a ligand contact to substrate. The FMN site is built by K215 and S243. Substrate is bound at residue 244–245 (NT). Residues G266, G295, and 316–317 (YS) each bind FMN.

The protein belongs to the dihydroorotate dehydrogenase family. Type 2 subfamily. In terms of assembly, monomer. FMN is required as a cofactor.

The protein resides in the cell membrane. The catalysed reaction is (S)-dihydroorotate + a quinone = orotate + a quinol. The protein operates within pyrimidine metabolism; UMP biosynthesis via de novo pathway; orotate from (S)-dihydroorotate (quinone route): step 1/1. Functionally, catalyzes the conversion of dihydroorotate to orotate with quinone as electron acceptor. This chain is Dihydroorotate dehydrogenase (quinone), found in Rhizobium etli (strain CIAT 652).